A 535-amino-acid polypeptide reads, in one-letter code: Beta-hexosaminidase 3 (535 aa).

A signal peptide spans 1–24 (MRGSGAKIAGVLPLFMLFIAGTIS). An N-linked (GlcNAc...) asparagine glycan is attached at Asn-92. Residues Cys-292 and Cys-334 are joined by a disulfide bond. Residue Glu-329 is the Proton donor of the active site. N-linked (GlcNAc...) asparagine glycans are attached at residues Asn-331, Asn-405, Asn-441, and Asn-496. Cys-506 and Cys-532 are disulfide-bonded.

It belongs to the glycosyl hydrolase 20 family. Post-translationally, N-glycosylated. In terms of tissue distribution, expressed in roots, leaves, stems, flowers and siliques.

The protein resides in the cell membrane. It catalyses the reaction Hydrolysis of terminal non-reducing N-acetyl-D-hexosamine residues in N-acetyl-beta-D-hexosaminides.. With respect to regulation, slightly inhibited by N-acetylcastanospermine. Has a broad substrate specificity. Can use synthetic substrates such as pyridylaminated chitotriose, p-nitrophenyl-beta-N-acetylglucosaminide, p-nitrophenyl-2-acetamido-2-deoxy-beta-D-glucopyranoside (pNP-GlcNAc), p-nitrophenyl-2-acetamido-2-deoxy-beta-D-galactopyranoside (pNP-GalNAc), 4-methylumbelliferyl-2-acetamido-2-deoxy-beta-D-glucopyranoside (MU-GlcNAc), and 4-methylumbelliferyl-6-sulfo-2-acetamido-2-deoxy-beta-D-glucopyranoside (MU-GlcNAc-6SO(4)) as substrates. Removes terminal GlcNAc residues from alpha1,3- and alpha1,6-mannosyl branches of biantennary N-glycans without any strict branch preference. Required for the presence of paucimannosidic N-glycans in glycoproteins of roots and leaves. This is Beta-hexosaminidase 3 (HEXO3) from Arabidopsis thaliana (Mouse-ear cress).